Consider the following 581-residue polypeptide: Zinc finger protein 674 (581 aa).

Positions 8–79 (LTFKDVFVDF…DGGTPVRTCA (72 aa)) constitute a KRAB domain. 4 consecutive C2H2-type zinc fingers follow at residues 224-246 (YKCTECGKVFIQKANLVVHQRTH), 252-274 (YECCECAKAFSQKSTLIAHQRTH), 280-302 (YECSECGKTFIQKSTLIKHQRTH), and 308-330 (FVCDKCPKAFKSSYHLIRHEKTH). The span at 357-371 (PQCSEHGKASDEKPS) shows a compositional bias: basic and acidic residues. Positions 357–377 (PQCSEHGKASDEKPSPTKHWR) are disordered. 7 C2H2-type zinc fingers span residues 385 to 407 (YECSKCGKSFRGKSHLSVHQRIH), 413 to 435 (YECSICGKTFSGKSHLSVHHRTH), 441 to 463 (YECRRCGKAFGEKSTLIVHQRMH), 469 to 491 (YKCNECGKAFSEKSPLIKHQRIH), 497 to 519 (YECTDCKKAFSRKSTLIKHQRIH), 525 to 547 (YKCSECGKAFSVKSTLIVHHRTH), and 553 to 575 (YECRDCGKAFSGKSTLIKHQRSH).

This sequence belongs to the krueppel C2H2-type zinc-finger protein family. Expressed in testis.

The protein localises to the nucleus. In terms of biological role, may be involved in transcriptional regulation. In Homo sapiens (Human), this protein is Zinc finger protein 674 (ZNF674).